The following is a 708-amino-acid chain: Nicastrin (708 aa).

A signal peptide spans 1–27 (MATTRGGSGPDPGSRGLLLLSFSVVLA). The Lumenal segment spans residues 28 to 668 (GLCGGNSVER…IFLIASKELE (641 aa)). N-linked (GlcNAc...) asparagine glycosylation is found at Asn44, Asn54, and Asn128. A disulfide bridge links Cys49 with Cys61. Cys139 and Cys158 are joined by a disulfide. N-linked (GlcNAc...) asparagine glycans are attached at residues Asn186 and Asn203. Intrachain disulfides connect Cys194–Cys212 and Cys229–Cys247. 11 N-linked (GlcNAc...) asparagine glycosylation sites follow: Asn263, Asn386, Asn434, Asn463, Asn505, Asn529, Asn561, Asn572, Asn579, Asn593, and Asn611. Cys585 and Cys619 form a disulfide bridge. A helical transmembrane segment spans residues 669–689 (FITLIVGFSTLVFSLIVTYCI). Residues 690-708 (NAKADVLFVAPREPGAVSY) lie on the Cytoplasmic side of the membrane.

It belongs to the nicastrin family. As to quaternary structure, component of the gamma-secretase complex. The functional gamma-secretase complex is composed of at least four polypeptides: a presenilin homodimer (PSEN1 or PSEN2), nicastrin (NCSTN), APH1 (APH1A or APH1B) and PEN2. Binds to proteolytic processed C-terminal fragments C83 and C99 of the amyloid precursor protein (APP). Interacts with PSEN1 and PSEN2. In terms of processing, N-glycosylated.

The protein resides in the membrane. It is found in the cytoplasmic vesicle membrane. Its subcellular location is the melanosome. Essential subunit of the gamma-secretase complex, an endoprotease complex that catalyzes the intramembrane cleavage of integral membrane proteins such as Notch receptors and APP (amyloid-beta precursor protein). The gamma-secretase complex plays a role in Notch and Wnt signaling cascades and regulation of downstream processes via its role in processing key regulatory proteins, and by regulating cytosolic CTNNB1 levels. The chain is Nicastrin (Ncstn) from Mus musculus (Mouse).